The following is a 71-amino-acid chain: ATP synthase subunit c (71 aa).

2 helical membrane passes run 9 to 29 (MIGY…IFAA) and 49 to 69 (LLGF…AFVI).

Belongs to the ATPase C chain family. F-type ATPases have 2 components, F(1) - the catalytic core - and F(0) - the membrane proton channel. F(1) has five subunits: alpha(3), beta(3), gamma(1), delta(1), epsilon(1). F(0) has three main subunits: a(1), b(2) and c(10-14). The alpha and beta chains form an alternating ring which encloses part of the gamma chain. F(1) is attached to F(0) by a central stalk formed by the gamma and epsilon chains, while a peripheral stalk is formed by the delta and b chains.

It localises to the cell membrane. In terms of biological role, f(1)F(0) ATP synthase produces ATP from ADP in the presence of a proton or sodium gradient. F-type ATPases consist of two structural domains, F(1) containing the extramembraneous catalytic core and F(0) containing the membrane proton channel, linked together by a central stalk and a peripheral stalk. During catalysis, ATP synthesis in the catalytic domain of F(1) is coupled via a rotary mechanism of the central stalk subunits to proton translocation. Key component of the F(0) channel; it plays a direct role in translocation across the membrane. A homomeric c-ring of between 10-14 subunits forms the central stalk rotor element with the F(1) delta and epsilon subunits. The sequence is that of ATP synthase subunit c from Micrococcus luteus (strain ATCC 4698 / DSM 20030 / JCM 1464 / CCM 169 / CCUG 5858 / IAM 1056 / NBRC 3333 / NCIMB 9278 / NCTC 2665 / VKM Ac-2230) (Micrococcus lysodeikticus).